Consider the following 214-residue polypeptide: Cell division protein B1 (214 aa).

In terms of biological role, part of a cell division machinery. In Sulfolobus acidocaldarius (strain ATCC 33909 / DSM 639 / JCM 8929 / NBRC 15157 / NCIMB 11770), this protein is Cell division protein B1.